The chain runs to 162 residues: 3-dehydroquinate dehydratase (162 aa).

Tyrosine 22 functions as the Proton acceptor in the catalytic mechanism. The substrate site is built by asparagine 73, histidine 79, and aspartate 86. Histidine 99 acts as the Proton donor in catalysis. Residues 100 to 101 and arginine 110 contribute to the substrate site; that span reads LS.

It belongs to the type-II 3-dehydroquinase family. As to quaternary structure, homododecamer.

The enzyme catalyses 3-dehydroquinate = 3-dehydroshikimate + H2O. It functions in the pathway metabolic intermediate biosynthesis; chorismate biosynthesis; chorismate from D-erythrose 4-phosphate and phosphoenolpyruvate: step 3/7. In terms of biological role, catalyzes a trans-dehydration via an enolate intermediate. The protein is 3-dehydroquinate dehydratase of Sulfurovum sp. (strain NBC37-1).